The following is a 694-amino-acid chain: Probable methyltransferase PMT11 (694 aa).

The Cytoplasmic segment spans residues 1–14; sequence MKPLTNGDLFKSPT. A helical; Signal-anchor for type II membrane protein transmembrane segment spans residues 15-32; the sequence is LIKISALVFVTVAFFYLG. Over 33–694 the chain is Lumenal; sequence KHWSDDGYQQ…LTCEKRLLRA (662 aa). N-linked (GlcNAc...) asparagine glycosylation is found at Asn69 and Asn77. The interval 83-128 is disordered; the sequence is IPATIRQQPPSVVADTEKVKVEANPPPPPPPSPSPPPPPGPVKSFG. Over residues 106-123 the composition is skewed to pro residues; it reads NPPPPPPPSPSPPPPPGP. Asn155, Asn378, and Asn423 each carry an N-linked (GlcNAc...) asparagine glycan.

This sequence belongs to the methyltransferase superfamily.

It localises to the golgi apparatus membrane. This chain is Probable methyltransferase PMT11, found in Arabidopsis thaliana (Mouse-ear cress).